The following is a 423-amino-acid chain: Mannose-6-phosphate isomerase (423 aa).

Alanine 2 bears the N-acetylalanine mark. Phosphoserine is present on residues serine 102 and serine 108. Residues glutamine 110, histidine 112, glutamate 137, and histidine 276 each contribute to the Zn(2+) site. Arginine 295 is a catalytic residue.

This sequence belongs to the mannose-6-phosphate isomerase type 1 family. It depends on Zn(2+) as a cofactor. As to expression, expressed in all tissues, but more abundant in heart, brain and skeletal muscle.

It localises to the cytoplasm. The catalysed reaction is D-mannose 6-phosphate = D-fructose 6-phosphate. It functions in the pathway nucleotide-sugar biosynthesis; GDP-alpha-D-mannose biosynthesis; alpha-D-mannose 1-phosphate from D-fructose 6-phosphate: step 1/2. Isomerase that catalyzes the interconversion of fructose-6-P and mannose-6-P and has a critical role in the supply of D-mannose derivatives required for many eukaryotic glycosylation reactions. The chain is Mannose-6-phosphate isomerase from Homo sapiens (Human).